The chain runs to 319 residues: ATP-dependent 6-phosphofructokinase (319 aa).

Glycine 11 contacts ATP. 21–25 (RAVVR) contributes to the ADP binding site. ATP contacts are provided by residues 72–73 (RC) and 102–105 (GDGS). Aspartate 103 serves as a coordination point for Mg(2+). Residue 125–127 (TID) participates in substrate binding. Residue aspartate 127 is the Proton acceptor of the active site. Arginine 154 is a binding site for ADP. Substrate-binding positions include arginine 162 and 169-171 (MGR). ADP-binding positions include 185 to 187 (GAE), arginine 211, and 213 to 215 (KKH). Substrate-binding positions include glutamate 222, arginine 243, and 249–252 (HIQR).

It belongs to the phosphofructokinase type A (PFKA) family. ATP-dependent PFK group I subfamily. Prokaryotic clade 'B1' sub-subfamily. Homotetramer. Requires Mg(2+) as cofactor.

The protein resides in the cytoplasm. The enzyme catalyses beta-D-fructose 6-phosphate + ATP = beta-D-fructose 1,6-bisphosphate + ADP + H(+). It functions in the pathway carbohydrate degradation; glycolysis; D-glyceraldehyde 3-phosphate and glycerone phosphate from D-glucose: step 3/4. With respect to regulation, allosterically activated by ADP and other diphosphonucleosides, and allosterically inhibited by phosphoenolpyruvate. Its function is as follows. Catalyzes the phosphorylation of D-fructose 6-phosphate to fructose 1,6-bisphosphate by ATP, the first committing step of glycolysis. This chain is ATP-dependent 6-phosphofructokinase, found in Bacillus pumilus (strain SAFR-032).